Consider the following 67-residue polypeptide: Large ribosomal subunit protein uL29 (67 aa).

This sequence belongs to the universal ribosomal protein uL29 family.

The chain is Large ribosomal subunit protein uL29 from Clostridium acetobutylicum (strain ATCC 824 / DSM 792 / JCM 1419 / IAM 19013 / LMG 5710 / NBRC 13948 / NRRL B-527 / VKM B-1787 / 2291 / W).